A 210-amino-acid chain; its full sequence is Imidazoleglycerol-phosphate dehydratase (210 aa).

A disordered region spans residues Pro185–Lys210.

It belongs to the imidazoleglycerol-phosphate dehydratase family.

It localises to the cytoplasm. The catalysed reaction is D-erythro-1-(imidazol-4-yl)glycerol 3-phosphate = 3-(imidazol-4-yl)-2-oxopropyl phosphate + H2O. The protein operates within amino-acid biosynthesis; L-histidine biosynthesis; L-histidine from 5-phospho-alpha-D-ribose 1-diphosphate: step 6/9. In Prochlorococcus marinus (strain SARG / CCMP1375 / SS120), this protein is Imidazoleglycerol-phosphate dehydratase.